The sequence spans 161 residues: Large ribosomal subunit protein uL23m (161 aa).

The N-terminal 34 residues, 1–34, are a transit peptide targeting the mitochondrion; sequence MSKIAGKRLVYFPNITFTLCRGLNLQPKFAVFRV.

The protein belongs to the universal ribosomal protein uL23 family. In terms of assembly, component of the mitochondrial large ribosomal subunit (mt-LSU). Mature yeast 74S mitochondrial ribosomes consist of a small (37S) and a large (54S) subunit. The 37S small subunit contains a 15S ribosomal RNA (15S mt-rRNA) and at least 32 different proteins. The 54S large subunit contains a 21S rRNA (21S mt-rRNA) and at least 45 different proteins. uL23m forms the wall of the exit tunnel. Interacts with the C-terminus of OXA1.

The protein localises to the mitochondrion. Its function is as follows. Component of the mitochondrial ribosome (mitoribosome), a dedicated translation machinery responsible for the synthesis of mitochondrial genome-encoded proteins, including at least some of the essential transmembrane subunits of the mitochondrial respiratory chain. The mitoribosomes are attached to the mitochondrial inner membrane and translation products are cotranslationally integrated into the membrane. This is Large ribosomal subunit protein uL23m (mrp20) from Schizosaccharomyces pombe (strain 972 / ATCC 24843) (Fission yeast).